The sequence spans 333 residues: Cap-specific mRNA (nucleoside-2'-O-)-methyltransferase (333 aa).

Tyr22 contacts mRNA. S-adenosyl-L-methionine-binding residues include Gln39, Tyr66, Gly68, Gly72, Asp95, Arg97, Val116, and Asp138. The binding to NPH-I stretch occupies residues 169–249 (PVASSLKWRC…NKIVRNKVVI (81 aa)). Lys175 acts as the For methyltransferase activity in catalysis. MRNA contacts are provided by residues 177–180 (RCPF), Asp182, 205–207 (SAE), and Glu233. A compositionally biased stretch (basic and acidic residues) spans 305–320 (SHEPIQRKISSKDSMS). The segment at 305–333 (SHEPIQRKISSKDSMSKNRNSKRSVRGNK) is disordered. Over residues 323-333 (RNSKRSVRGNK) the composition is skewed to basic residues.

The protein belongs to the class I-like SAM-binding methyltransferase superfamily. Poxvirus/kinetoplastid 2'-O-MTase family. As to quaternary structure, interacts with poly(A) polymerase catalytic subunit OPG063. Interacts with OPG109 and OPG123; these interactions might help linking transcription to capping and polyadenylation.

Its subcellular location is the virion. The catalysed reaction is a 5'-end (N(7)-methyl 5'-triphosphoguanosine)-ribonucleoside in mRNA + S-adenosyl-L-methionine = a 5'-end (N(7)-methyl 5'-triphosphoguanosine)-(2'-O-methyl-ribonucleoside) in mRNA + S-adenosyl-L-homocysteine + H(+). Displays methyltransferase, positive regulation of the poly(A) polymerase and transcription elongation activities. Involved in the modification of both mRNA ends and in intermediate and late gene positive transcription elongation. At the mRNAs 5' end, methylates the ribose 2' OH group of the first transcribed nucleotide, thereby producing a 2'-O-methylpurine cap. At the 3' end, functions as a processivity factor which stimulates the activity of the viral poly(A) polymerase OPG063 that creates mRNA's poly(A) tail. In the presence of OPG102, OPG063 does not dissociate from the RNA allowing tail elongation to around 250 adenylates. The protein is Cap-specific mRNA (nucleoside-2'-O-)-methyltransferase (OPG102) of Cynomys gunnisoni (Gunnison's prairie dog).